The chain runs to 106 residues: UPF0449 protein C19orf25 homolog (106 aa).

Belongs to the UPF0449 family.

The protein is UPF0449 protein C19orf25 homolog of Xenopus tropicalis (Western clawed frog).